The chain runs to 508 residues: Photosystem II CP47 reaction center protein (508 aa).

6 helical membrane-spanning segments follow: residues 21 to 36 (SVHI…WAGS), 101 to 115 (IVFS…IWHW), 140 to 156 (GIHL…FGAF), 203 to 218 (IAAG…FHLS), 237 to 252 (VLSS…AFVV), and 457 to 472 (SFAL…HGAR).

The protein belongs to the PsbB/PsbC family. PsbB subfamily. PSII is composed of 1 copy each of membrane proteins PsbA, PsbB, PsbC, PsbD, PsbE, PsbF, PsbH, PsbI, PsbJ, PsbK, PsbL, PsbM, PsbT, PsbX, PsbY, PsbZ, Psb30/Ycf12, at least 3 peripheral proteins of the oxygen-evolving complex and a large number of cofactors. It forms dimeric complexes. The cofactor is Binds multiple chlorophylls. PSII binds additional chlorophylls, carotenoids and specific lipids..

Its subcellular location is the plastid. It is found in the chloroplast thylakoid membrane. In terms of biological role, one of the components of the core complex of photosystem II (PSII). It binds chlorophyll and helps catalyze the primary light-induced photochemical processes of PSII. PSII is a light-driven water:plastoquinone oxidoreductase, using light energy to abstract electrons from H(2)O, generating O(2) and a proton gradient subsequently used for ATP formation. The protein is Photosystem II CP47 reaction center protein of Arabis hirsuta (Hairy rock-cress).